The following is a 225-amino-acid chain: Ribonuclease 3 (225 aa).

Positions Leu5 to Asp127 constitute an RNase III domain. Residue Glu40 participates in Mg(2+) binding. The active site involves Asp44. 2 residues coordinate Mg(2+): Asp113 and Glu116. Glu116 is a catalytic residue. One can recognise a DRBM domain in the interval Asp154 to Met224.

Belongs to the ribonuclease III family. As to quaternary structure, homodimer. The cofactor is Mg(2+).

It is found in the cytoplasm. The enzyme catalyses Endonucleolytic cleavage to 5'-phosphomonoester.. Its function is as follows. Digests double-stranded RNA. Involved in the processing of primary rRNA transcript to yield the immediate precursors to the large and small rRNAs (23S and 16S). Also processes some mRNAs, and tRNAs when they are encoded in the rRNA operon. CRISPR (clustered regularly interspaced short palindromic repeat) is an adaptive immune system that provides protection against mobile genetic elements (viruses, transposable elements and conjugative plasmids). CRISPR clusters contain spacers, sequences complementary to antecedent mobile elements, and target invading nucleic acids. CRISPR clusters are transcribed and processed into CRISPR RNA (crRNA). In this organism endogenous ribonuclease 3 and Cas9 are required for correct coprocessing of pre-crRNA and the trans-encoded small RNA (tracrRNA). Cas9, crRNA and tracrRNA are required for cleavage of invading DNA. Complements pre-crRNA and tracrRNA coprocessing defects in an rnc deletion in S.pyogenes strain 370. In Pasteurella multocida (strain Pm70), this protein is Ribonuclease 3.